The primary structure comprises 1163 residues: AF4/FMR2 family member 4 (1163 aa).

Basic and acidic residues predominate over residues 1–19 (MNREDRNVLRMKERERRNQ). 4 disordered regions span residues 1-48 (MNRE…EDKL), 76-312 (AIPK…ASGD), 324-904 (THSW…PRRT), and 1034-1073 (NSYNNSQAPSPGLGSKAVGMPSPVSPKLSPGNSGNYSSGA). Positions 115–128 (PSTSQSQKRSSGLQ) are enriched in polar residues. Ser-120 carries the phosphoserine modification. Composition is skewed to low complexity over residues 129–148 (SGHSSQRTSAGSSSGTNSSG) and 177–194 (RSSSPGKPQAVSSLNSSH). The span at 198 to 217 (HGNDHHSKEHQRSKSPRDPD) shows a compositional bias: basic and acidic residues. Residue Ser-212 is modified to Phosphoserine. Polar residues-rich tracts occupy residues 227–251 (PFSSGQHSTQSFPPSLMSKSNSMLQ), 273–285 (EHYSSQSHGNSMT), and 350–375 (KESQQSNFGTGEQKRYNPSKTSNGHQ). Phosphoserine occurs at positions 387, 388, 389, and 392. Polar residues predominate over residues 403–412 (PRSTPGSNSE). Positions 413-429 (PSHHNSEGADNSRDDSS) are enriched in basic and acidic residues. A compositionally biased stretch (low complexity) spans 430-462 (SHSGSESSSGSDSESESSSSDSEANEPSQSASP). Phosphoserine is present on residues Ser-487, Ser-490, and Ser-491. 3 stretches are compositionally biased toward polar residues: residues 488–501 (PASSVDSNIPSSQG), 510–528 (GTGNSYTDTSGPKETSSAT), and 549–560 (SPAQSDSTTQRR). Position 549 is a phosphoserine (Ser-549). Basic and acidic residues predominate over residues 568-586 (KKAEKAAAEEPRGGLKIES). Lys-583 participates in a covalent cross-link: Glycyl lysine isopeptide (Lys-Gly) (interchain with G-Cter in SUMO2). Residues 599–612 (SRHKAATKGSRKPN) show a composition bias toward basic residues. Basic and acidic residues predominate over residues 613 to 627 (IKKESKSSPRPTAEK). A Phosphoserine modification is found at Ser-671. A Phosphothreonine modification is found at Thr-674. Phosphoserine is present on residues Ser-680, Ser-694, Ser-703, and Ser-706. Residue Tyr-712 is modified to Phosphotyrosine. 3 stretches are compositionally biased toward basic and acidic residues: residues 730–761 (PYKETEPPKGEKKNVPEKHTREAQKQASEKVS), 769–789 (KNEDDNRASESKKPKTEDKNS), and 799–811 (ESSKQSAAKEKDL). A Phosphoserine modification is found at Ser-814. Lys-822 bears the N6-acetyllysine mark. 5 positions are modified to phosphoserine: Ser-836, Ser-1043, Ser-1055, Ser-1058, and Ser-1062. Low complexity predominate over residues 836-862 (SQSSSLKSSSNSNKETSGSSKNSSSTS). Residues 1062–1073 (SPGNSGNYSSGA) are compositionally biased toward low complexity.

It belongs to the AF4 family. Component of the super elongation complex (SEC), at least composed of EAF1, EAF2, CDK9, MLLT3/AF9, AFF (AFF1 or AFF4), the P-TEFb complex and ELL (ELL, ELL2 or ELL3). Interacts with ELL3; the interaction is direct. Interacts with ELL2; the interaction is direct and leads to stabilize ELL2 and prevent ELL2 ubiquitination and degradation. Dephosphorylated at Ser-549 by the PNUTS-PP1 complex, promoting RNA polymerase II transcription pause-release. In terms of tissue distribution, ubiquitously expressed. Strongly expressed in heart, placenta, skeletal muscle, pancreas and to a lower extent in brain.

It is found in the nucleus. Its subcellular location is the chromosome. In terms of biological role, key component of the super elongation complex (SEC), a complex required to increase the catalytic rate of RNA polymerase II transcription by suppressing transient pausing by the polymerase at multiple sites along the DNA. In the SEC complex, AFF4 acts as a central scaffold that recruits other factors through direct interactions with ELL proteins (ELL, ELL2 or ELL3) and the P-TEFb complex. In case of infection by HIV-1 virus, the SEC complex is recruited by the viral Tat protein to stimulate viral gene expression. The chain is AF4/FMR2 family member 4 (AFF4) from Homo sapiens (Human).